Reading from the N-terminus, the 126-residue chain is Histone H2B type 1-L (126 aa).

Low complexity predominate over residues 1-12 (MPELAKSAPAPK). The segment at 1 to 36 (MPELAKSAPAPKKGSKKAVTKAQKKDGKKRKRSRKE) is disordered. Position 2 is an N-acetylproline (proline 2). An ADP-ribosyl glutamic acid modification is found at glutamate 3. Lysine 6 carries the post-translational modification N6-(2-hydroxyisobutyryl)lysine; alternate. Lysine 6 is subject to N6-(beta-hydroxybutyryl)lysine; alternate. N6-acetyllysine; alternate is present on lysine 6. Lysine 6 bears the N6-butyryllysine; alternate mark. Lysine 6 carries the N6-crotonyllysine; alternate modification. Lysine 6 bears the N6-lactoyllysine; alternate mark. Lysine 6 is covalently cross-linked (Glycyl lysine isopeptide (Lys-Gly) (interchain with G-Cter in SUMO2); alternate). ADP-ribosylserine is present on serine 7. Lysine 12 carries the N6-(beta-hydroxybutyryl)lysine; alternate modification. Lysine 12 and lysine 13 each carry N6-acetyllysine; alternate. Residues lysine 12 and lysine 13 each carry the N6-crotonyllysine; alternate modification. N6-lactoyllysine; alternate is present on lysine 12. Lysine 13 is modified (N6-(2-hydroxyisobutyryl)lysine; alternate). Residue serine 15 is modified to Phosphoserine; by STK4/MST1. 4 positions are modified to N6-acetyllysine; alternate: lysine 16, lysine 17, lysine 21, and lysine 24. An N6-crotonyllysine; alternate mark is found at lysine 16, lysine 17, lysine 21, and lysine 24. Residues lysine 16, lysine 17, lysine 21, and lysine 24 each carry the N6-lactoyllysine; alternate modification. An N6-(beta-hydroxybutyryl)lysine; alternate mark is found at lysine 17 and lysine 21. Lysine 17 carries the post-translational modification N6-glutaryllysine; alternate. Lysine 21 and lysine 24 each carry N6-(2-hydroxyisobutyryl)lysine; alternate. Position 21 is an N6-butyryllysine; alternate (lysine 21). Lysine 21 is covalently cross-linked (Glycyl lysine isopeptide (Lys-Gly) (interchain with G-Cter in SUMO2); alternate). Position 25 is an N6-(2-hydroxyisobutyryl)lysine (lysine 25). Lysine 35 bears the N6-(2-hydroxyisobutyryl)lysine; alternate mark. N6-(beta-hydroxybutyryl)lysine; alternate is present on lysine 35. Lysine 35 carries the N6-crotonyllysine; alternate modification. Lysine 35 bears the N6-glutaryllysine; alternate mark. Lysine 35 bears the N6-succinyllysine; alternate mark. Residue lysine 35 forms a Glycyl lysine isopeptide (Lys-Gly) (interchain with G-Cter in ubiquitin); alternate linkage. At glutamate 36 the chain carries PolyADP-ribosyl glutamic acid. Serine 37 bears the Phosphoserine; by AMPK mark. 3 positions are modified to N6-(2-hydroxyisobutyryl)lysine; alternate: lysine 44, lysine 47, and lysine 58. Residue lysine 44 is modified to N6-lactoyllysine; alternate. N6-glutaryllysine; alternate occurs at positions 44 and 47. Position 47 is an N6-methyllysine; alternate (lysine 47). Lysine 58 is modified (N6,N6-dimethyllysine; alternate). Position 80 is a dimethylated arginine (arginine 80). The residue at position 86 (lysine 86) is an N6-(2-hydroxyisobutyryl)lysine; alternate. N6-(beta-hydroxybutyryl)lysine; alternate is present on lysine 86. The residue at position 86 (lysine 86) is an N6-acetyllysine; alternate. Lysine 86 bears the N6-lactoyllysine; alternate mark. An N6,N6,N6-trimethyllysine; alternate modification is found at lysine 86. Omega-N-methylarginine occurs at positions 87 and 93. The residue at position 109 (lysine 109) is an N6-(2-hydroxyisobutyryl)lysine; alternate. Lysine 109 bears the N6-lactoyllysine; alternate mark. The residue at position 109 (lysine 109) is an N6-glutaryllysine; alternate. N6-methyllysine; alternate is present on lysine 109. Residue serine 113 is glycosylated (O-linked (GlcNAc) serine). Threonine 116 is modified (phosphothreonine). 2 positions are modified to N6-(2-hydroxyisobutyryl)lysine; alternate: lysine 117 and lysine 121. Residues lysine 117 and lysine 121 each carry the N6-(beta-hydroxybutyryl)lysine; alternate modification. 2 positions are modified to N6-lactoyllysine; alternate: lysine 117 and lysine 121. An N6-glutaryllysine; alternate mark is found at lysine 117 and lysine 121. An N6-succinyllysine; alternate mark is found at lysine 117 and lysine 121. Residue lysine 117 is modified to N6-malonyllysine; alternate. An N6-methylated lysine; alternate modification is found at lysine 117. Lysine 121 participates in a covalent cross-link: Glycyl lysine isopeptide (Lys-Gly) (interchain with G-Cter in ubiquitin); alternate.

The protein belongs to the histone H2B family. The nucleosome is a histone octamer containing two molecules each of H2A, H2B, H3 and H4 assembled in one H3-H4 heterotetramer and two H2A-H2B heterodimers. The octamer wraps approximately 147 bp of DNA. Monoubiquitination at Lys-35 (H2BK34Ub) by the MSL1/MSL2 dimer is required for histone H3 'Lys-4' (H3K4me) and 'Lys-79' (H3K79me) methylation and transcription activation at specific gene loci, such as HOXA9 and MEIS1 loci. Similarly, monoubiquitination at Lys-121 (H2BK120Ub) by the RNF20/40 complex gives a specific tag for epigenetic transcriptional activation and is also prerequisite for histone H3 'Lys-4' and 'Lys-79' methylation. It also functions cooperatively with the FACT dimer to stimulate elongation by RNA polymerase II. H2BK120Ub also acts as a regulator of mRNA splicing: deubiquitination by USP49 is required for efficient cotranscriptional splicing of a large set of exons. Post-translationally, phosphorylation at Ser-37 (H2BS36ph) by AMPK in response to stress promotes transcription. Phosphorylated on Ser-15 (H2BS14ph) by STK4/MST1 during apoptosis; which facilitates apoptotic chromatin condensation. Also phosphorylated on Ser-15 in response to DNA double strand breaks (DSBs), and in correlation with somatic hypermutation and immunoglobulin class-switch recombination. In terms of processing, glcNAcylation at Ser-113 promotes monoubiquitination of Lys-121. It fluctuates in response to extracellular glucose, and associates with transcribed genes. ADP-ribosylated by PARP1 or PARP2 on Ser-7 (H2BS6ADPr) in response to DNA damage. H2BS6ADPr promotes recruitment of CHD1L. Mono-ADP-ribosylated on Glu-3 (H2BE2ADPr) by PARP3 in response to single-strand breaks. Poly ADP-ribosylation on Glu-36 (H2BE35ADPr) by PARP1 regulates adipogenesis: it inhibits phosphorylation at Ser-37 (H2BS36ph), thereby blocking expression of pro-adipogenetic genes. Post-translationally, crotonylation (Kcr) is specifically present in male germ cells and marks testis-specific genes in post-meiotic cells, including X-linked genes that escape sex chromosome inactivation in haploid cells. Crotonylation marks active promoters and enhancers and confers resistance to transcriptional repressors. It is also associated with post-meiotically activated genes on autosomes. In terms of processing, lactylated in macrophages by EP300/P300 by using lactoyl-CoA directly derived from endogenous or exogenous lactate, leading to stimulates gene transcription.

Its subcellular location is the nucleus. It is found in the chromosome. In terms of biological role, core component of nucleosome. Nucleosomes wrap and compact DNA into chromatin, limiting DNA accessibility to the cellular machineries which require DNA as a template. Histones thereby play a central role in transcription regulation, DNA repair, DNA replication and chromosomal stability. DNA accessibility is regulated via a complex set of post-translational modifications of histones, also called histone code, and nucleosome remodeling. This chain is Histone H2B type 1-L, found in Homo sapiens (Human).